A 431-amino-acid polypeptide reads, in one-letter code: uncharacterized protein (431 aa).

Disordered stretches follow at residues 17–66 (VDPE…GQQA) and 81–415 (GSVT…ALPR). Residues 91-106 (DKADREPAARPRDPRS) are compositionally biased toward basic and acidic residues. Basic residues predominate over residues 173-195 (TYRRRRPTAATPSRKKKARRGPK). Low complexity predominate over residues 235 to 244 (RTPGPVHSAA). Over residues 299 to 312 (RMGGSSGGRGGTPG) the composition is skewed to gly residues. Low complexity predominate over residues 317-342 (RAAPGARPTAPDGAPGRWDGPADGPA). The segment covering 343-360 (PGLGRGGWGVGREAGGSG) has biased composition (gly residues).

This is an uncharacterized protein from Homo sapiens (Human).